The chain runs to 519 residues: ATP synthase subunit alpha 1 (519 aa).

172-179 (GDRQTGKT) is a binding site for ATP.

It belongs to the ATPase alpha/beta chains family. In terms of assembly, F-type ATPases have 2 components, CF(1) - the catalytic core - and CF(0) - the membrane proton channel. CF(1) has five subunits: alpha(3), beta(3), gamma(1), delta(1), epsilon(1). CF(0) has three main subunits: a(1), b(2) and c(9-12). The alpha and beta chains form an alternating ring which encloses part of the gamma chain. CF(1) is attached to CF(0) by a central stalk formed by the gamma and epsilon chains, while a peripheral stalk is formed by the delta and b chains.

Its subcellular location is the cell inner membrane. The catalysed reaction is ATP + H2O + 4 H(+)(in) = ADP + phosphate + 5 H(+)(out). Functionally, produces ATP from ADP in the presence of a proton gradient across the membrane. The alpha chain is a regulatory subunit. The protein is ATP synthase subunit alpha 1 of Psychromonas ingrahamii (strain DSM 17664 / CCUG 51855 / 37).